Reading from the N-terminus, the 449-residue chain is Exodeoxyribonuclease 7 large subunit (449 aa).

Belongs to the XseA family. As to quaternary structure, heterooligomer composed of large and small subunits.

It localises to the cytoplasm. It catalyses the reaction Exonucleolytic cleavage in either 5'- to 3'- or 3'- to 5'-direction to yield nucleoside 5'-phosphates.. Bidirectionally degrades single-stranded DNA into large acid-insoluble oligonucleotides, which are then degraded further into small acid-soluble oligonucleotides. The polypeptide is Exodeoxyribonuclease 7 large subunit (Salmonella newport (strain SL254)).